The following is a 649-amino-acid chain: Glycerol-3-phosphate dehydrogenase, mitochondrial (649 aa).

69 to 97 (DVLIIGGGATGTGVAVDASTRGLNVCLLE) lines the FAD pocket.

The protein belongs to the FAD-dependent glycerol-3-phosphate dehydrogenase family. The cofactor is FAD.

It is found in the mitochondrion. The catalysed reaction is a quinone + sn-glycerol 3-phosphate = dihydroxyacetone phosphate + a quinol. The protein operates within polyol metabolism; glycerol degradation via glycerol kinase pathway; glycerone phosphate from sn-glycerol 3-phosphate (anaerobic route): step 1/1. The sequence is that of Glycerol-3-phosphate dehydrogenase, mitochondrial (gut2) from Schizosaccharomyces pombe (strain 972 / ATCC 24843) (Fission yeast).